The chain runs to 164 residues: MEMTSTQRLILANQYRLMGLLDPTNTQKYQRLEAIVKGGFGLELKELDKEFSDLSEAECLTVLNTLEMYNALQISYNNLPDKSALTPHRLQFAGYCAVREKKYLNYLRFITSVEGKYQEFMRCEHGCDSQTPMWDKYLKMLDAWRACPHEYHLSMAEIQKILNA.

Belongs to the UPF0304 family.

In Histophilus somni (strain 2336) (Haemophilus somnus), this protein is UPF0304 protein HSM_1818.